The sequence spans 475 residues: Protein translocase subunit SecD (475 aa).

The next 6 helical transmembrane spans lie at 7–27, 313–333, 338–358, 364–384, 410–430, and 437–457; these read LLIT…SLKF, KGFM…FIYY, LIAD…MAYL, LPGV…NVLI, FWTI…LFQF, and GFAV…VTVT.

It belongs to the SecD/SecF family. SecD subfamily. In terms of assembly, forms a complex with SecF. Part of the essential Sec protein translocation apparatus which comprises SecA, SecYEG and auxiliary proteins SecDF. Other proteins may also be involved.

The protein resides in the cell inner membrane. Part of the Sec protein translocase complex. Interacts with the SecYEG preprotein conducting channel. SecDF uses the proton motive force (PMF) to complete protein translocation after the ATP-dependent function of SecA. The sequence is that of Protein translocase subunit SecD from Endomicrobium trichonymphae.